Reading from the N-terminus, the 82-residue chain is UPF0291 protein LJ_1507 (82 aa).

Residues 61-82 (DGKEVTSEKAKEAQRRKGLRKD) are disordered.

The protein belongs to the UPF0291 family.

Its subcellular location is the cytoplasm. The sequence is that of UPF0291 protein LJ_1507 from Lactobacillus johnsonii (strain CNCM I-12250 / La1 / NCC 533).